Consider the following 201-residue polypeptide: dTTP/UTP pyrophosphatase (201 aa).

Asp-73 functions as the Proton acceptor in the catalytic mechanism.

This sequence belongs to the Maf family. YhdE subfamily. A divalent metal cation serves as cofactor.

The protein resides in the cytoplasm. It catalyses the reaction dTTP + H2O = dTMP + diphosphate + H(+). The catalysed reaction is UTP + H2O = UMP + diphosphate + H(+). Its function is as follows. Nucleoside triphosphate pyrophosphatase that hydrolyzes dTTP and UTP. May have a dual role in cell division arrest and in preventing the incorporation of modified nucleotides into cellular nucleic acids. In Pseudomonas aeruginosa (strain ATCC 15692 / DSM 22644 / CIP 104116 / JCM 14847 / LMG 12228 / 1C / PRS 101 / PAO1), this protein is dTTP/UTP pyrophosphatase.